A 175-amino-acid polypeptide reads, in one-letter code: Hypoxanthine-guanine phosphoribosyltransferase (175 aa).

Positions 40 and 41 each coordinate diphosphate. The Mg(2+) site is built by glutamate 96 and aspartate 97. Residue aspartate 100 is the Proton acceptor of the active site. GMP-binding positions include lysine 128, 149–150 (FL), and aspartate 156. Arginine 162 contributes to the diphosphate binding site.

This sequence belongs to the purine/pyrimidine phosphoribosyltransferase family. Mg(2+) serves as cofactor.

The protein localises to the cytoplasm. It carries out the reaction IMP + diphosphate = hypoxanthine + 5-phospho-alpha-D-ribose 1-diphosphate. The catalysed reaction is GMP + diphosphate = guanine + 5-phospho-alpha-D-ribose 1-diphosphate. It functions in the pathway purine metabolism; IMP biosynthesis via salvage pathway; IMP from hypoxanthine: step 1/1. The protein operates within purine metabolism; GMP biosynthesis via salvage pathway; GMP from guanine: step 1/1. Functionally, purine salvage pathway enzyme that catalyzes the transfer of the ribosyl-5-phosphate group from 5-phospho-alpha-D-ribose 1-diphosphate (PRPP) to the N9 position of the 6-oxopurines hypoxanthine and guanine to form the corresponding ribonucleotides IMP (inosine 5'-monophosphate) and GMP (guanosine 5'-monophosphate), with the release of PPi. This chain is Hypoxanthine-guanine phosphoribosyltransferase (hpt), found in Mycoplasma genitalium (strain ATCC 33530 / DSM 19775 / NCTC 10195 / G37) (Mycoplasmoides genitalium).